A 296-amino-acid chain; its full sequence is NAD kinase (296 aa).

Asp-73 functions as the Proton acceptor in the catalytic mechanism. NAD(+) contacts are provided by residues 73 to 74 (DG), Lys-78, 151 to 152 (NE), Arg-178, Asp-180, and 191 to 196 (TAHAMS).

Belongs to the NAD kinase family. Requires a divalent metal cation as cofactor.

Its subcellular location is the cytoplasm. It carries out the reaction NAD(+) + ATP = ADP + NADP(+) + H(+). Functionally, involved in the regulation of the intracellular balance of NAD and NADP, and is a key enzyme in the biosynthesis of NADP. Catalyzes specifically the phosphorylation on 2'-hydroxyl of the adenosine moiety of NAD to yield NADP. This chain is NAD kinase, found in Francisella tularensis subsp. tularensis (strain WY96-3418).